A 361-amino-acid chain; its full sequence is Phosphate acyltransferase (361 aa).

The protein belongs to the PlsX family. Homodimer. Probably interacts with PlsY.

It localises to the cytoplasm. The catalysed reaction is a fatty acyl-[ACP] + phosphate = an acyl phosphate + holo-[ACP]. The protein operates within lipid metabolism; phospholipid metabolism. Catalyzes the reversible formation of acyl-phosphate (acyl-PO(4)) from acyl-[acyl-carrier-protein] (acyl-ACP). This enzyme utilizes acyl-ACP as fatty acyl donor, but not acyl-CoA. The sequence is that of Phosphate acyltransferase from Parvibaculum lavamentivorans (strain DS-1 / DSM 13023 / NCIMB 13966).